A 464-amino-acid polypeptide reads, in one-letter code: L-cystine uptake protein TcyP (464 aa).

Transmembrane regions (helical) follow at residues 3–23, 34–54, 73–93, 107–127, 184–204, 225–245, 263–283, 347–367, 371–391, and 395–415; these read TLLV…LYYM, VFTA…IYEP, YVKL…ISAF, GLII…GIAA, PTST…FIGV, IVMR…LALM, FVLA…LLIA, AGIY…IDPL, FILT…GVGG, and FAAL…ALVI.

The protein belongs to the dicarboxylate/amino acid:cation symporter (DAACS) (TC 2.A.23) family.

It is found in the membrane. In terms of biological role, mediates uptake of L-cystine, the oxidized form of L-cysteine. This chain is L-cystine uptake protein TcyP, found in Bacillus cereus (strain ATCC 14579 / DSM 31 / CCUG 7414 / JCM 2152 / NBRC 15305 / NCIMB 9373 / NCTC 2599 / NRRL B-3711).